The sequence spans 120 residues: NAD(P)H-quinone oxidoreductase subunit 3, chloroplastic (120 aa).

3 consecutive transmembrane segments (helical) span residues 9–29 (FFWA…LISG), 64–84 (MFAL…PWAM), and 88–108 (VLGV…IIGL).

Belongs to the complex I subunit 3 family. As to quaternary structure, NDH is composed of at least 16 different subunits, 5 of which are encoded in the nucleus.

The protein localises to the plastid. Its subcellular location is the chloroplast thylakoid membrane. It catalyses the reaction a plastoquinone + NADH + (n+1) H(+)(in) = a plastoquinol + NAD(+) + n H(+)(out). The catalysed reaction is a plastoquinone + NADPH + (n+1) H(+)(in) = a plastoquinol + NADP(+) + n H(+)(out). NDH shuttles electrons from NAD(P)H:plastoquinone, via FMN and iron-sulfur (Fe-S) centers, to quinones in the photosynthetic chain and possibly in a chloroplast respiratory chain. The immediate electron acceptor for the enzyme in this species is believed to be plastoquinone. Couples the redox reaction to proton translocation, and thus conserves the redox energy in a proton gradient. This chain is NAD(P)H-quinone oxidoreductase subunit 3, chloroplastic, found in Nicotiana tabacum (Common tobacco).